A 72-amino-acid polypeptide reads, in one-letter code: Hypertrehalosaemic prohormone (72 aa).

The N-terminal stretch at methionine 1–alanine 21 is a signal peptide. Glutamine 22 carries the pyrrolidone carboxylic acid modification. The residue at position 31 (threonine 31) is a Threonine amide.

The protein belongs to the AKH/HRTH/RPCH family. In terms of tissue distribution, expressed in corpora cardiaca.

It localises to the secreted. Its function is as follows. Hypertrehalosaemic factors are neuropeptides that elevate the level of trehalose in the hemolymph (trehalose is the major carbohydrate in the hemolymph of insects). In Blaberus discoidalis (Tropical cockroach), this protein is Hypertrehalosaemic prohormone.